A 522-amino-acid chain; its full sequence is Target of rapamycin complex 2 subunit MAPKAP1 (522 aa).

The interval 2–184 is interaction with MAP3K2; it reads GFLDNPTIIL…KKIDVYLPLH (183 aa). The segment at 2-267 is interaction with NBN; it reads GFLDNPTIIL…GFSTLALVEK (266 aa). Threonine 86 carries the phosphothreonine modification. 4 positions are modified to phosphoserine: serine 128, serine 186, serine 315, and serine 356. Residues 139-267 enclose the CRIM domain; that stretch reads QSILSVRLEQ…GFSTLALVEK (129 aa). The segment at 279-353 is SIN1-type RBD; sequence LFVRINAAHG…QSAWEFCLVR (75 aa). One can recognise an SIN1-type PH domain in the interval 382 to 487; the sequence is HYKSFKVSMI…IVLKVNYILE (106 aa). Residue arginine 393 coordinates a 1,2-diacyl-sn-glycero-3-phospho-(1D-myo-inositol-3,4,5-trisphosphate). A Phosphothreonine modification is found at threonine 398. A 1,2-diacyl-sn-glycero-3-phospho-(1D-myo-inositol-3,4,5-trisphosphate)-binding residues include lysine 428 and lysine 464. The interval 468-522 is interaction with ATF2; sequence FESDAATVNEIVLKVNYILESRASTARADYFAQKQRKLNRRTSFSFQKEKKSGQQ. Serine 510 is modified (phosphoserine).

Belongs to the SIN1 family. Component of the mechanistic target of rapamycin complex 2 (mTORC2), consisting in two heterotretramers composed of MTOR, MLST8, RICTOR and MAPKAP1/SIN1. The mTORC2 core complex associates with PRR5/PROTOR1 and/or PRR5L/PROTOR2. Contrary to mTORC1, mTORC2 does not bind to and is not sensitive to FKBP12-rapamycin. Interacts with MAP3K2. Interacts with ATF2. Interacts with MAPK8. Interacts with GTP-bound HRAS and KRAS; inhibiting their activity. Interacts with IFNAR2. In terms of processing, phosphorylation at Ser-128 by PKC promotes relocalization to the perinuclear region, where the mTORC2 complex specifically mediates phosphorylation of SGK1. Phosphorylated at Thr-86 by AKT1 or RPS6KB1 in the presence of growth factors; the effect of this phosphorylation is however unclear. According to two studies, phosphorylation at Thr-86 by AKT1 is part of a positive feedback loop that increases mTORC2 activation. According to another study, phosphorylation at Thr-86 and Thr-398 by RPS6KB1 promotes dissociation from the mTORC2 complex, leading to inhibit mTORC2 signaling. In terms of tissue distribution, present in the lumenal epithelium and glandular epithelium of endometrium (at protein level).

The protein localises to the cell membrane. It is found in the cytoplasmic vesicle. The protein resides in the endoplasmic reticulum membrane. It localises to the early endosome membrane. Its subcellular location is the late endosome membrane. The protein localises to the lysosome membrane. It is found in the golgi apparatus membrane. The protein resides in the mitochondrion outer membrane. It localises to the cytoplasm. Its subcellular location is the perinuclear region. The protein localises to the nucleus. Its activity is regulated as follows. Phosphatidylinositol 3,4,5-trisphosphate (PI(3,4,5)P3) promotes MTOR activation by relieving MAPKAP1/SIN1-mediated inhibition of MTOR that takes place in absence of PI(3,4,5)P3. Component of the mechanistic target of rapamycin complex 2 (mTORC2), which transduces signals from growth factors to pathways involved in proliferation, cytoskeletal organization, lipogenesis and anabolic output. In response to growth factors, mTORC2 phosphorylates and activates AGC protein kinase family members, including AKT (AKT1, AKT2 and AKT3), PKC (PRKCA, PRKCB and PRKCE) and SGK1. In contrast to mTORC1, mTORC2 is nutrient-insensitive. Within the mTORC2 complex, MAPKAP1/SIN1 acts as a substrate adapter which recognizes and binds AGC protein kinase family members for phosphorylation by MTOR. mTORC2 plays a critical role in AKT1 activation by mediating phosphorylation of different sites depending on the context, such as 'Thr-450', 'Ser-473', 'Ser-477' or 'Thr-479', facilitating the phosphorylation of the activation loop of AKT1 on 'Thr-308' by PDPK1/PDK1 which is a prerequisite for full activation. mTORC2 catalyzes the phosphorylation of SGK1 at 'Ser-422' and of PRKCA on 'Ser-657'. The mTORC2 complex also phosphorylates various proteins involved in insulin signaling, such as FBXW8 and IGF2BP1. mTORC2 acts upstream of Rho GTPases to regulate the actin cytoskeleton, probably by activating one or more Rho-type guanine nucleotide exchange factors. mTORC2 promotes the serum-induced formation of stress-fibers or F-actin. MAPKAP1 inhibits MAP3K2 by preventing its dimerization and autophosphorylation. Inhibits HRAS and KRAS independently of mTORC2 complex. Enhances osmotic stress-induced phosphorylation of ATF2 and ATF2-mediated transcription. Involved in ciliogenesis, regulates cilia length through its interaction with CCDC28B independently of mTORC2 complex. The sequence is that of Target of rapamycin complex 2 subunit MAPKAP1 (MAPKAP1) from Ovis aries (Sheep).